Consider the following 239-residue polypeptide: MARGCLCCLKYTMFLFNLIFWLCGCGLLGVGIWLSVSQGNFATFSPSFPSLSAANLVIAIGTIVMVTGFLGCLGAIKENKCLLLSFFIVLLIILLAELILIILFFVYMDKVNENAKQDLKEGLLLYNTENNVGLKNAWNIIQAEMRCCGVTDYTDWYPVLGENTVPDRCCMENSQGCGRNSTTPLWRTGCYEKVKLWFDDNKHVLGTVGMCILIMQILGMAFSMTLFQHIHRTGKKYDA.

Over 1-13 (MARGCLCCLKYTM) the chain is Cytoplasmic. The chain crosses the membrane as a helical span at residues 14 to 34 (FLFNLIFWLCGCGLLGVGIWL). Residues 35-55 (SVSQGNFATFSPSFPSLSAAN) lie on the Extracellular side of the membrane. Residues 56–76 (LVIAIGTIVMVTGFLGCLGAI) traverse the membrane as a helical segment. Residues 77-85 (KENKCLLLS) are Cytoplasmic-facing. The chain crosses the membrane as a helical span at residues 86 to 106 (FFIVLLIILLAELILIILFFV). The Extracellular segment spans residues 107-203 (YMDKVNENAK…VKLWFDDNKH (97 aa)). Asn-180 carries N-linked (GlcNAc...) asparagine glycosylation. The chain crosses the membrane as a helical span at residues 204 to 224 (VLGTVGMCILIMQILGMAFSM). Topologically, residues 225 to 239 (TLFQHIHRTGKKYDA) are cytoplasmic.

Belongs to the tetraspanin (TM4SF) family. As to quaternary structure, found in a complex with GP6. Glycosylated. As to expression, strongly expressed in megakaryocytes, platelets and lung. Weakly expressed in bone marrow, brain and kidney (at protein level).

It localises to the membrane. This is Tetraspanin-9 (Tspan9) from Mus musculus (Mouse).